Here is a 663-residue protein sequence, read N- to C-terminus: Probable receptor-like protein kinase At1g49730 (663 aa).

The signal sequence occupies residues 1 to 25 (MVVNSQAFLLALIALLATQLPSLMA). The Extracellular portion of the chain corresponds to 26–254 (ADCPLDFSGS…TNPYHLTMVP (229 aa)). Residues Asn36, Asn46, Asn70, Asn101, and Asn171 are each glycosylated (N-linked (GlcNAc...) asparagine). The tract at residues 213-243 (SFSPVASPEPSPSTVGGISPSNSDSQMTTSR) is disordered. Over residues 224-243 (PSTVGGISPSNSDSQMTTSR) the composition is skewed to polar residues. A helical transmembrane segment spans residues 255–275 (TIGIVVTAVALTMLVVLVILI). At 276 to 663 (RRKNRELDES…PHSPINGFSF (388 aa)) the chain is on the cytoplasmic side. The 283-residue stretch at 327-609 (NDFNTVIGQG…ESCDPVHSAF (283 aa)) folds into the Protein kinase domain. Residues 333-341 (IGQGGFGTV) and Lys355 each bind ATP. Asp451 functions as the Proton acceptor in the catalytic mechanism. Positions 631–663 (RGDSRIFGPSSSTTSRSHYSRSLPHSPINGFSF) are disordered. Residues 640–652 (SSSTTSRSHYSRS) are compositionally biased toward low complexity.

It belongs to the protein kinase superfamily. Ser/Thr protein kinase family.

Its subcellular location is the cell membrane. The enzyme catalyses L-seryl-[protein] + ATP = O-phospho-L-seryl-[protein] + ADP + H(+). It carries out the reaction L-threonyl-[protein] + ATP = O-phospho-L-threonyl-[protein] + ADP + H(+). The chain is Probable receptor-like protein kinase At1g49730 from Arabidopsis thaliana (Mouse-ear cress).